Consider the following 363-residue polypeptide: Cytochrome P450 CYP82D47 (363 aa).

Cysteine 342 lines the heme pocket.

Belongs to the cytochrome P450 family. Requires heme as cofactor.

Its function is as follows. Probable heme-thiolate monooxygenase. This chain is Cytochrome P450 CYP82D47, found in Panax ginseng (Korean ginseng).